A 126-amino-acid chain; its full sequence is Putative 15 kDa capsid protein (126 aa).

It localises to the virion. The protein is Putative 15 kDa capsid protein (P15) of Bombyx mori nuclear polyhedrosis virus (BmNPV).